The chain runs to 206 residues: MGQKVNPIGFRLKINNNTWDSVWYANKDYKEKLHQDLFIRSYINESFKHAGLSKIIIERKVDLLSVTIHSSRPGVIIGKKGLDIEKVKQKIAEKVKNSVEVNVVGIKRPEIDAALISSSIAQQLEKRVSFRRAMKKAIQSCLRMGGGGIKVGCSGRLGGAEIARTEWYKEGRLPLHTLRANIDYAFCEAKTIYGIIGVKVWVYIVN.

Residues 39–107 (IRSYINESFK…SVEVNVVGIK (69 aa)) enclose the KH type-2 domain.

Belongs to the universal ribosomal protein uS3 family. In terms of assembly, part of the 30S ribosomal subunit. Forms a tight complex with proteins S10 and S14.

Functionally, binds the lower part of the 30S subunit head. Binds mRNA in the 70S ribosome, positioning it for translation. In Wolbachia sp. subsp. Brugia malayi (strain TRS), this protein is Small ribosomal subunit protein uS3.